We begin with the raw amino-acid sequence, 136 residues long: Histone H3 (136 aa).

A disordered region spans residues 1-43 (MARTKQTARKNVGGKAPRKHIGQKSARKTASTTAGMKKPHRYR). Residue lysine 10 is modified to N6-methylated lysine. N6-acetyllysine occurs at positions 15 and 24. Residues 16-27 (APRKHIGQKSAR) show a composition bias toward basic residues. N6-methylated lysine occurs at positions 28 and 37.

Belongs to the histone H3 family. The nucleosome is a histone octamer containing two molecules each of H2A, H2B, H3 and H4 assembled in one H3-H4 heterotetramer and two H2A-H2B heterodimers. The octamer wraps approximately 147 bp of DNA.

Its subcellular location is the nucleus. The protein resides in the chromosome. In terms of biological role, core component of nucleosome. Nucleosomes wrap and compact DNA into chromatin, limiting DNA accessibility to the cellular machineries which require DNA as a template. Histones thereby play a central role in transcription regulation, DNA repair, DNA replication and chromosomal stability. DNA accessibility is regulated via a complex set of post-translational modifications of histones, also called histone code, and nucleosome remodeling. The chain is Histone H3 from Euplotes crassus.